The following is a 330-amino-acid chain: GMP reductase (330 aa).

Cys-180 functions as the Thioimidate intermediate in the catalytic mechanism. Residue 209–232 (LIADGGIRHNGDIAKSVRFGASMV) coordinates NADP(+).

Belongs to the IMPDH/GMPR family. GuaC type 2 subfamily.

The catalysed reaction is IMP + NH4(+) + NADP(+) = GMP + NADPH + 2 H(+). Its function is as follows. Catalyzes the irreversible NADPH-dependent deamination of GMP to IMP. It functions in the conversion of nucleobase, nucleoside and nucleotide derivatives of G to A nucleotides, and in maintaining the intracellular balance of A and G nucleotides. The chain is GMP reductase from Lactobacillus johnsonii (strain CNCM I-12250 / La1 / NCC 533).